The following is a 722-amino-acid chain: Methionine--tRNA ligase (722 aa).

The short motif at 11–21 is the 'HIGH' region element; that stretch reads PYANGPIHAGH. Zn(2+)-binding residues include Cys143, Cys146, Cys156, and Cys159. The 'KMSKS' region motif lies at 344–348; the sequence is KFSTS. Thr347 contributes to the ATP binding site. In terms of domain architecture, tRNA-binding spans 622–722; that stretch reads DFAKLDLRVG…KEVKLGAKVR (101 aa).

The protein belongs to the class-I aminoacyl-tRNA synthetase family. MetG type 1 subfamily. In terms of assembly, homodimer. Zn(2+) is required as a cofactor.

The protein resides in the cytoplasm. It catalyses the reaction tRNA(Met) + L-methionine + ATP = L-methionyl-tRNA(Met) + AMP + diphosphate. Is required not only for elongation of protein synthesis but also for the initiation of all mRNA translation through initiator tRNA(fMet) aminoacylation. This is Methionine--tRNA ligase from Pyrococcus abyssi (strain GE5 / Orsay).